The sequence spans 320 residues: Cytochrome c biogenesis protein CcsA (320 aa).

Helical transmembrane passes span 15–35 (FSIV…DEII), 43–63 (KGMI…WIYS), 71–91 (LYES…VPYF), 98–118 (LSTI…SGLL), 143–163 (MILS…LLVI), 224–244 (VISL…VWAN), 251–271 (WNWD…AIYL), and 285–305 (AIVA…VNLL).

The protein belongs to the CcmF/CycK/Ccl1/NrfE/CcsA family. As to quaternary structure, may interact with Ccs1.

The protein resides in the plastid. The protein localises to the chloroplast thylakoid membrane. Required during biogenesis of c-type cytochromes (cytochrome c6 and cytochrome f) at the step of heme attachment. This chain is Cytochrome c biogenesis protein CcsA, found in Panax ginseng (Korean ginseng).